Here is a 325-residue protein sequence, read N- to C-terminus: Prenytransferase adrG (325 aa).

The next 7 membrane-spanning stretches (helical) occupy residues 47–67 (LVGV…AVLL), 71–91 (MLLS…DDLI), 117–137 (ALLL…FLPW), 163–183 (PQIT…SLGL), 189–209 (MTPT…IDVI), 236–256 (LLSY…GVLT), and 258–278 (LGLP…WVLL).

This sequence belongs to the UbiA prenyltransferase family. Mg(2+) is required as a cofactor.

Its subcellular location is the membrane. It carries out the reaction 3,5-dimethylorsellinate + (2E,6E)-farnesyl diphosphate = (3R)-3-farnesyl-6-hydroxy-2,3,5-trimethyl-4-oxocyclohexa-1,5-diene-1-carboxylate + diphosphate + H(+). The protein operates within secondary metabolite biosynthesis; terpenoid biosynthesis. Prenytransferase; part of the gene cluster that mediates the biosynthesis of andrastins, meroterpenoid compounds that exhibit inhibitory activity against ras farnesyltransferase, suggesting that they could be promising leads for antitumor agents. The first step of the pathway is the synthesis of 3,5-dimethylorsellinic acid (DMOA) by the polyketide synthase adrD via condensation of one acetyl-CoA starter unit with 3 malonyl-CoA units and 2 methylations. DMAO is then converted to farnesyl-DMAO by the prenyltransferase adrG. The methyltransferase adrK catalyzes the methylation of the carboxyl group of farnesyl-DMAO to farnesyl-DMAO methyl ester which is further converted to epoxyfarnesyl-DMAO methyl ester by the FAD-dependent monooxygenase adrH. The terpene cyclase adrI then catalyzes the carbon skeletal rearrangement to generate the andrastin E, the first compound in the pathway having the andrastin scaffold, with the tetracyclic ring system. The post-cyclization tailoring enzymes adrF, adrE, adrJ, and adrA, are involved in the conversion of andrastin E into andrastin A. The short chain dehydrogenase adrF is responsible for the oxidation of the C-3 a hydroxyl group of andrastin E to yield the corresponding ketone, andrastin D. The ketoreductase adrE stereoselectively reduces the carbonyl moiety to reverse the stereochemistry of the C-3 position to yield andrastin F. The acetyltransferase adrJ is the acetyltransferase that attaches the acetyl group to the C-3 hydroxyl group of andrastin F to yield andrastin C. Finally, the cytochrome P450 monooxygenase adrA catalyzes two sequential oxidation reactions of the C-23 methyl group, to generate the corresponding alcohol andrastin B, and aldehyde andrastin A. The protein is Prenytransferase adrG of Penicillium rubens (strain ATCC 28089 / DSM 1075 / NRRL 1951 / Wisconsin 54-1255) (Penicillium chrysogenum).